A 205-amino-acid chain; its full sequence is UPF0111 protein YkaA (205 aa).

The protein belongs to the UPF0111 family.

This Bacillus subtilis (strain 168) protein is UPF0111 protein YkaA (ykaA).